Here is a 140-residue protein sequence, read N- to C-terminus: Coiled-coil domain-containing protein 126 (140 aa).

The signal sequence occupies residues 1-26; sequence MFFTISRKNMSQKLSLLLLVFGLIWG. N-linked (GlcNAc...) asparagine glycosylation is found at N110 and N134. The disordered stretch occupies residues 120–140; sequence TSGNLVPVTTNKRTNVSGSIR.

The protein localises to the secreted. In Homo sapiens (Human), this protein is Coiled-coil domain-containing protein 126 (CCDC126).